We begin with the raw amino-acid sequence, 335 residues long: MKTAILTMNYSSISNVSEDIAEVLRENGEIVTITKNPFYIPKAEKLIVFIPFHPPSLNPYLYAFYQFNGKKLFYTTCDGIPNIEIVNKYLLQDVKFIPNSKFSAMNLQEVGLQTDLPVFHGINFKIVENAEKLVPQLKQKLDKDFPNTIKFGIVSGLTKRKNMDLMLQVFNELNTKYPDIAKKIHFFVISHKQFTQNEVPANVHFVAEFGFNSREYIFGFYGAMDYIIVPSGTEGFGMPVLESMAMGTPVIHQLMPPFDEFTSWQWNLLIKSSKVEEYYDKEHGQKWKIHKFEIEDMINAIILASELQDREERSTKLKELAKRYDIRNLYTRFLE.

This sequence belongs to the glycosyltransferase group 1 family. Glycosyltransferase 4 subfamily.

This is an uncharacterized protein from Sulfolobus islandicus rod-shaped virus 1 (SIRV-1).